A 20-amino-acid polypeptide reads, in one-letter code: Fibrinolytic zinc metalloproteinase (20 aa).

The 14-residue stretch at 7 to 20 (RYVQLVITVDHVMN) folds into the Peptidase M12B domain.

Requires Zn(2+) as cofactor.

Its subcellular location is the secreted. Hydrolyzes alpha and beta chains of human fibrinogen and human fibrin. No activity against the gamma chain of human fibrinogen, human thrombin, bovine serum albumin, ovalbumin and hemoglobin. Has anticoagulant activity on human plasma and protects mice against death due from experimentally induced platelet thromboembolism with an ED(50) of 40 ug/kg. The sequence is that of Fibrinolytic zinc metalloproteinase from Ganoderma lucidum (Ling zhi medicinal fungus).